An 885-amino-acid polypeptide reads, in one-letter code: DNA-directed RNA polymerase subunit Rpo1N (885 aa).

Zn(2+) contacts are provided by C60, C63, C70, H73, C100, C103, C150, and C153. D464, D466, and D468 together coordinate Mg(2+).

It belongs to the RNA polymerase beta' chain family. Part of the RNA polymerase complex. Mg(2+) is required as a cofactor. It depends on Zn(2+) as a cofactor.

The protein resides in the cytoplasm. The catalysed reaction is RNA(n) + a ribonucleoside 5'-triphosphate = RNA(n+1) + diphosphate. DNA-dependent RNA polymerase (RNAP) catalyzes the transcription of DNA into RNA using the four ribonucleoside triphosphates as substrates. Forms the clamp head domain. In Thermoplasma acidophilum (strain ATCC 25905 / DSM 1728 / JCM 9062 / NBRC 15155 / AMRC-C165), this protein is DNA-directed RNA polymerase subunit Rpo1N.